A 143-amino-acid polypeptide reads, in one-letter code: Large ribosomal subunit protein uL16c (143 aa).

This sequence belongs to the universal ribosomal protein uL16 family. Part of the 50S ribosomal subunit.

The protein localises to the plastid. It localises to the chloroplast. The polypeptide is Large ribosomal subunit protein uL16c (Spirogyra maxima (Green alga)).